Consider the following 507-residue polypeptide: Tryptamine 4-monooxygenase (507 aa).

The N-terminal stretch at 1–19 is a signal peptide; that stretch reads MIVLLVSLVLAGCIYYANA. The segment at 403–425 is disordered; it reads PNPSEFRPERYLSSDGKPDPTVR. A compositionally biased stretch (basic and acidic residues) spans 408–425; that stretch reads FRPERYLSSDGKPDPTVR. A heme-binding site is contributed by cysteine 439.

Belongs to the cytochrome P450 family. Requires heme as cofactor.

The enzyme catalyses tryptamine + AH2 + O2 = 4-hydroxytryptamine + A + H2O. It functions in the pathway secondary metabolite biosynthesis. Tryptamine 4-monooxygenase; part of the gene cluster that mediates the biosynthesis of psilocybin, a psychotropic tryptamine-derived natural product. The first step in the pathway is the decarboxylation of L-tryptophan to tryptamine by the decarboxylase psiD. PsiD does not decarboxylate phenylalanine, tyrosine, or 5-hydroxy- L -tryptophan (5-HTP). 4-hydroxy-L-tryptophan is accepted as substrate by psiD as well. The cytochrome P450 monooxygenase psiH then converts tryptamine to 4-hydroxytryptamine. The kinase psiK catalyzes the 4-O-phosphorylation step by converting 4-hydroxytryptamine into norbaeocystin. The methyltransferase psiM then catalyzes iterative methyl transfer to the amino group of norbaeocystin to yield psilocybin via a monomethylated intermediate, baeocystin. In Psilocybe cyanescens, this protein is Tryptamine 4-monooxygenase.